The chain runs to 298 residues: Uricase (298 aa).

Catalysis depends on charge relay system residues K18 and T63. Positions 63, 64, 165, 182, 229, 230, and 256 each coordinate urate. H258 functions as the Charge relay system in the catalytic mechanism. The short motif at 296–298 (ARM) is the Microbody targeting signal element.

The protein belongs to the uricase family. Homotetramer; dimer of dimers.

Its subcellular location is the peroxisome. The enzyme catalyses urate + O2 + H2O = 5-hydroxyisourate + H2O2. It participates in purine metabolism; urate degradation; (S)-allantoin from urate: step 1/3. Its activity is regulated as follows. Competitively inhibited by xanthine. Functionally, catalyzes the oxidation of uric acid to 5-hydroxyisourate, which is further processed to form (S)-allantoin. This chain is Uricase, found in Danio rerio (Zebrafish).